The primary structure comprises 73 residues: Large ribosomal subunit protein bL28 (73 aa).

It belongs to the bacterial ribosomal protein bL28 family.

The polypeptide is Large ribosomal subunit protein bL28 (Anaeromyxobacter sp. (strain Fw109-5)).